An 828-amino-acid chain; its full sequence is Leucine--tRNA ligase (828 aa).

Positions 36-46 (PYPSGKIHIGH) match the 'HIGH' region motif. A 'KMSKS' region motif is present at residues 595-599 (KMSKS). Residue Lys-598 participates in ATP binding.

It belongs to the class-I aminoacyl-tRNA synthetase family.

It localises to the cytoplasm. It catalyses the reaction tRNA(Leu) + L-leucine + ATP = L-leucyl-tRNA(Leu) + AMP + diphosphate. The polypeptide is Leucine--tRNA ligase (Rickettsia prowazekii (strain Madrid E)).